The chain runs to 247 residues: 2,3-bisphosphoglycerate-dependent phosphoglycerate mutase (247 aa).

Substrate contacts are provided by residues 8-15 (RHGESQWN), 21-22 (TG), Arg-60, 87-90 (ERHY), Lys-98, 114-115 (RR), and 183-184 (GN). His-9 serves as the catalytic Tele-phosphohistidine intermediate. The active-site Proton donor/acceptor is the Glu-87.

This sequence belongs to the phosphoglycerate mutase family. BPG-dependent PGAM subfamily.

It carries out the reaction (2R)-2-phosphoglycerate = (2R)-3-phosphoglycerate. It functions in the pathway carbohydrate degradation; glycolysis; pyruvate from D-glyceraldehyde 3-phosphate: step 3/5. In terms of biological role, catalyzes the interconversion of 2-phosphoglycerate and 3-phosphoglycerate. The polypeptide is 2,3-bisphosphoglycerate-dependent phosphoglycerate mutase (Chlorobium phaeovibrioides (strain DSM 265 / 1930) (Prosthecochloris vibrioformis (strain DSM 265))).